Consider the following 146-residue polypeptide: Hut operon positive regulatory protein (146 aa).

It belongs to the HutP family. Homohexamer.

Antiterminator that binds to cis-acting regulatory sequences on the mRNA in the presence of histidine, thereby suppressing transcription termination and activating the hut operon for histidine utilization. In Bacillus mycoides (strain KBAB4) (Bacillus weihenstephanensis), this protein is Hut operon positive regulatory protein.